A 71-amino-acid polypeptide reads, in one-letter code: uncharacterized protein (71 aa).

The segment at M1–K20 is disordered.

This is an uncharacterized protein from Methanocaldococcus jannaschii (strain ATCC 43067 / DSM 2661 / JAL-1 / JCM 10045 / NBRC 100440) (Methanococcus jannaschii).